Here is a 259-residue protein sequence, read N- to C-terminus: Type III pantothenate kinase (259 aa).

6–13 contacts ATP; that stretch reads DVGNTNIV. Residues tyrosine 100 and 107–110 contribute to the substrate site; that span reads GADR. The Proton acceptor role is filled by aspartate 109. Aspartate 129 is a binding site for K(+). Threonine 132 is a binding site for ATP. Residue threonine 184 coordinates substrate.

It belongs to the type III pantothenate kinase family. As to quaternary structure, homodimer. It depends on NH4(+) as a cofactor. K(+) serves as cofactor.

The protein localises to the cytoplasm. The enzyme catalyses (R)-pantothenate + ATP = (R)-4'-phosphopantothenate + ADP + H(+). Its pathway is cofactor biosynthesis; coenzyme A biosynthesis; CoA from (R)-pantothenate: step 1/5. In terms of biological role, catalyzes the phosphorylation of pantothenate (Pan), the first step in CoA biosynthesis. This Clostridium perfringens (strain 13 / Type A) protein is Type III pantothenate kinase.